We begin with the raw amino-acid sequence, 388 residues long: (S)-8-oxocitronellyl enol synthase ISY1 (388 aa).

Residues 35 to 37 (TGI), 63 to 64 (RR), 81 to 82 (DV), 105 to 106 (TW), and Q143 contribute to the NADP(+) site. Catalysis depends on residues K147 and Y178. Residues Y178, I205, and 212–214 (SMM) contribute to the NADP(+) site.

The protein belongs to the short-chain dehydrogenases/reductases (SDR) family.

It catalyses the reaction (S)-8-oxocitronellyl enol + NADP(+) = (6E)-8-oxogeranial + NADPH + H(+). The catalysed reaction is (S)-8-oxocitronellyl enol + NAD(+) = (6E)-8-oxogeranial + NADH + H(+). Its function is as follows. Iridoid synthase that catalyzes the first step in generation of the iridoid ring scaffold using the linear monoterpene (6E)-8-oxogeranial as substrate. Iridoids comprise a large family of distinctive bicyclic monoterpenes that possess a wide range of pharmacological activities, including anticancer, anti-inflammatory, antifungal and antibacterial activities. Catalyzes the conversion of the linear monoterpene (6E)-8-oxogeranial to (S)-8-oxocitronellyl enol, a precursor of nepetalactones, which are metabolites that are both insect-repellent and have euphoric effect in cats. The polypeptide is (S)-8-oxocitronellyl enol synthase ISY1 (Nepeta racemosa (Catmint)).